The following is a 301-amino-acid chain: MLPRTMFSYGKENAFPVTPISNRNGTKGAGSKRAPLGSTKQSNAPSSVTVPRTVLGGKSTNISKFISAPSTKKMSPMDISMDSPTILEPNSQGISRSAVQERSKRLSASPRRSSLTDTPLPNELEEDIEYMPPPVHLDPIQSLGFDDVAIDCETLDPWPSMQNKATSVTIRNTPASDFHVYKEFSDDDPIQFPLLSVDGDSPLTEKDTNLTTPATLKASDQQRKVLEKPSVSKQSSSRTRLSTVYRTKLASGKSIPRPLSHKLTRPRVTASGNSRRRPLSRSIHSLSSSRIDFSSLDTGLL.

Disordered stretches follow at residues Met-1–Leu-55, Asp-82–Leu-120, and Ala-218–His-284. The D-box 1 signature appears at Arg-33–Leu-36. The segment covering Ser-38 to Val-50 has biased composition (polar residues). The short motif at Arg-52–Leu-55 is the D-box 2 element. Polar residues-rich tracts occupy residues Glu-88–Ala-98, Pro-110–Pro-119, and Val-231–Tyr-245. Repeats lie at residues Ala-250–Ser-260 and Ala-270–Ser-280.

Belongs to the securin family. Interacts with the caspase-like cut1, and prevents its protease activity probably by covering its active site. Ubiquitinated by the anaphase promoting complex (APC) at the onset of anaphase, conducting to its degradation.

It localises to the cytoplasm. Its subcellular location is the nucleus. Its function is as follows. Regulatory protein, which plays a central role in chromosome stability. Probably acts by blocking the action of key proteins. During the mitosis, it blocks separase/cut1 function, preventing the proteolysis of the cohesin complex and the subsequent segregation of the chromosomes. At the onset of anaphase, it is ubiquitinated, conducting to its destruction and to the liberation of cut1. This is Securin (cut2) from Schizosaccharomyces pombe (strain 972 / ATCC 24843) (Fission yeast).